The primary structure comprises 134 residues: MSWQTYVDDHLMCDIEGHEGHRLTAAAIVGQDGSVWAQSATFPQFKPEEMNGIMTDFNEPGHLAPTGLHLGGTKYMVIQGEAGAVIRGKKGSGGITIKKTGQALVFGIYEEPVTPGQCNMVVERLGDYLLEQGL.

A disulfide bond links Cys-13 and Cys-118. The Involved in PIP2 interaction signature appears at 84 to 100 (AVIRGKKGSGGITIKKT). Position 114 is a phosphothreonine (Thr-114).

It belongs to the profilin family. As to quaternary structure, occurs in many kinds of cells as a complex with monomeric actin in a 1:1 ratio. In terms of processing, phosphorylated by MAP kinases.

It is found in the cytoplasm. The protein resides in the cytoskeleton. Binds to actin and affects the structure of the cytoskeleton. At high concentrations, profilin prevents the polymerization of actin, whereas it enhances it at low concentrations. In Olea europaea (Common olive), this protein is Profilin-2.